The chain runs to 43 residues: Omega-ctenitoxin-Pr1a (43 aa).

Cystine bridges form between Cys-2-Cys-17, Cys-9-Cys-22, Cys-16-Cys-33, and Cys-24-Cys-31. Gly-43 carries the post-translational modification Glycine amide.

Expressed by the venom gland.

It is found in the secreted. In terms of biological role, inhibits high-voltage activated calcium channels. Shifts the voltage-dependence for activation towards hyperpolarized membrane potentials for L- (Cav1), P/Q- (Cav2.1/CACNA1A) and R-type (Cav2.3/CACNA1E) calcium currents. Causes immediate agitation and clockwise gyration, followed by the gradual development of general flaccid paralysis when injected intracerebroventricular into mice at dose levels of 5 ug per mouse. The polypeptide is Omega-ctenitoxin-Pr1a (Phoneutria reidyi (Brazilian Amazonian armed spider)).